Here is a 450-residue protein sequence, read N- to C-terminus: MAQFFKAKPNSSKQLSAKLSLSVNQLDHLGAGIAQHQGKVVFIPGALPDETVTVQFTEQKKNYARAKLIKVDTPSSERVEPECPHYHTCGGCDLQHMSLSGQREHKEAALLDIMAKFAGAEGGTLSPELTGEGWHYRRRARLATLFDKNTKHLSLGFRAASSSNVVPISQCQVLAKPLSDLIVPFAKLLNQLTAKASLGHLELIAADNGHFAVLRITKALNDKDLAKLSAFAEQHQIHICLQDNEGQFQGVGAELVLPVYQLLDDKAESDAVSLSFTPGNFVQVNGQINKAMVAQAMDWLAPALDERILDLFCGMGNFSLPLAKMGADVIGVEGVAEMVTQARVNAKANNLDKLTFFHGDLSADLSLEPWMGKIDKLLLDPARAGAFESLQWLKKMKPRKVVYVSCNPASLARDSAVLLERGYRLQQLGLIDMFPQTHHIEAMALFELTK.

Residues 12–70 (SKQLSAKLSLSVNQLDHLGAGIAQHQGKVVFIPGALPDETVTVQFTEQKKNYARAKLIK) form the TRAM domain. 4 residues coordinate [4Fe-4S] cluster: C83, C89, C92, and C171. 6 residues coordinate S-adenosyl-L-methionine: Q283, F312, N317, E333, D360, and D380. C406 serves as the catalytic Nucleophile.

This sequence belongs to the class I-like SAM-binding methyltransferase superfamily. RNA M5U methyltransferase family. RlmD subfamily.

The catalysed reaction is uridine(1939) in 23S rRNA + S-adenosyl-L-methionine = 5-methyluridine(1939) in 23S rRNA + S-adenosyl-L-homocysteine + H(+). Catalyzes the formation of 5-methyl-uridine at position 1939 (m5U1939) in 23S rRNA. This Shewanella baltica (strain OS155 / ATCC BAA-1091) protein is 23S rRNA (uracil(1939)-C(5))-methyltransferase RlmD.